A 347-amino-acid polypeptide reads, in one-letter code: Protein-glutamate methylesterase/protein-glutamine glutaminase 1 (347 aa).

The Response regulatory domain occupies 6–123; the sequence is RVLVVDDSAT…LRPFGDLAEK (118 aa). The residue at position 57 (aspartate 57) is a 4-aspartylphosphate. In terms of domain architecture, CheB-type methylesterase spans 150–342; sequence FRVGRKIVAI…EEILKMTAAR (193 aa). Catalysis depends on residues serine 162, histidine 188, and aspartate 284.

It belongs to the CheB family. Phosphorylated by CheA. Phosphorylation of the N-terminal regulatory domain activates the methylesterase activity.

The protein localises to the cytoplasm. It catalyses the reaction [protein]-L-glutamate 5-O-methyl ester + H2O = L-glutamyl-[protein] + methanol + H(+). The catalysed reaction is L-glutaminyl-[protein] + H2O = L-glutamyl-[protein] + NH4(+). Involved in chemotaxis. Part of a chemotaxis signal transduction system that modulates chemotaxis in response to various stimuli. Catalyzes the demethylation of specific methylglutamate residues introduced into the chemoreceptors (methyl-accepting chemotaxis proteins or MCP) by CheR. Also mediates the irreversible deamidation of specific glutamine residues to glutamic acid. This is Protein-glutamate methylesterase/protein-glutamine glutaminase 1 from Rhizobium johnstonii (strain DSM 114642 / LMG 32736 / 3841) (Rhizobium leguminosarum bv. viciae).